Consider the following 102-residue polypeptide: Small ribosomal subunit protein uS10 (102 aa).

The protein belongs to the universal ribosomal protein uS10 family. As to quaternary structure, part of the 30S ribosomal subunit.

Its function is as follows. Involved in the binding of tRNA to the ribosomes. The chain is Small ribosomal subunit protein uS10 from Rhodopseudomonas palustris (strain BisB18).